The primary structure comprises 213 residues: Pyrrolidone-carboxylate peptidase (213 aa).

Catalysis depends on residues Glu-80, Cys-143, and His-166.

This sequence belongs to the peptidase C15 family. Homotetramer.

Its subcellular location is the cytoplasm. The enzyme catalyses Release of an N-terminal pyroglutamyl group from a polypeptide, the second amino acid generally not being Pro.. In terms of biological role, removes 5-oxoproline from various penultimate amino acid residues except L-proline. This chain is Pyrrolidone-carboxylate peptidase, found in Clavibacter michiganensis subsp. michiganensis (strain NCPPB 382).